The sequence spans 131 residues: Profilin-2 (131 aa).

The protein belongs to the profilin family. As to quaternary structure, occurs in many kinds of cells as a complex with monomeric actin in a 1:1 ratio.

The protein resides in the cytoplasm. The protein localises to the cytoskeleton. Its function is as follows. Binds to actin and affects the structure of the cytoskeleton. At high concentrations, profilin prevents the polymerization of actin, whereas it enhances it at low concentrations. By binding to PIP2, it inhibits the formation of IP3 and DG. The polypeptide is Profilin-2 (Lilium longiflorum (Trumpet lily)).